A 291-amino-acid polypeptide reads, in one-letter code: Putative heme-binding peroxidase (291 aa).

His-61 (proton acceptor) is an active-site residue. A heme b-binding site is contributed by His-185. The Tryptophan radical intermediate role is filled by Trp-201.

It belongs to the peroxidase family. Cytochrome c peroxidase subfamily. Heme b is required as a cofactor.

Its function is as follows. Destroys radicals which are normally produced within the cells and which are toxic to biological systems. The sequence is that of Putative heme-binding peroxidase (CCP2) from Candida albicans (strain SC5314 / ATCC MYA-2876) (Yeast).